The primary structure comprises 463 residues: MSSVTGSGITSGFIDLATYDNLERAMYGGSDATTYFVKEHYPVGWFTKLPSLAAKMSGNPAFGQQFSVGVPRSGDYILNAWLVLKTPEVELLAANQLGENGTIRWTKNPMHNIVESVTLSFNDISAQSFNTAYLDAWSEYTMPEAKRIGYYNMIGNTSDLINPAPATGQDGARVLPAKNLVLPLPFFFSRDSGLALPVVSLPYNEIRITVKLRAIQDLLILQHNTTGAISPIVASDLAGGLPDTVEANVYMTVALITGDERQAMSSTVRDMVVEQVQVAPVHMVNPRNAATFHTDMRFSHAVKALMFMVQNVTHPSVGSNYTCVTPVVGAGNTVLEPALAVDPVKSASLVYENTTRLPDMGVEYYSLVEPWYYATSIPVSTGHHLYSYALSMQDPHPSGSTNYGRLTNASLNVTLSAEATTAAAGGGGDNSGYTTAQKYALIVLAINHNIIRIMNGSMGFPIL.

It belongs to the NCLDV major capsid protein family. In terms of assembly, homotrimer.

The protein resides in the virion. Functionally, major capsid protein that self assembles to form an icosahedral capsid. Represents around 50% of the total virion protein mass. The protein is Major capsid protein (MCP) of Rana tigrina ranavirus.